A 197-amino-acid polypeptide reads, in one-letter code: Probable molybdenum cofactor guanylyltransferase (197 aa).

GTP is bound by residues 6–8 (LAG), lysine 18, aspartate 65, and aspartate 97. Residue aspartate 97 coordinates Mg(2+).

This sequence belongs to the MobA family. Requires Mg(2+) as cofactor.

It localises to the cytoplasm. The catalysed reaction is Mo-molybdopterin + GTP + H(+) = Mo-molybdopterin guanine dinucleotide + diphosphate. Transfers a GMP moiety from GTP to Mo-molybdopterin (Mo-MPT) cofactor (Moco or molybdenum cofactor) to form Mo-molybdopterin guanine dinucleotide (Mo-MGD) cofactor. The polypeptide is Probable molybdenum cofactor guanylyltransferase (Staphylococcus carnosus (strain TM300)).